The following is a 336-amino-acid chain: uncharacterized protein (336 aa).

Disordered stretches follow at residues 29 to 93 (GGVS…HSGA) and 116 to 147 (LQER…GVTG). 2 stretches are compositionally biased toward polar residues: residues 70–82 (SGGS…TSTA) and 125–141 (PWRT…SQPH).

This is an uncharacterized protein from Bos taurus (Bovine).